Consider the following 622-residue polypeptide: Low affinity potassium transport system protein Kup (622 aa).

Transmembrane regions (helical) follow at residues 9–29 (LPAI…TSPL), 49–69 (VFGF…IKYL), 103–123 (VIMG…TPAI), 137–157 (PQLD…LFMI), 165–185 (VGKL…VLGL), 213–233 (VSFI…ALYA), 247–267 (WFTV…ALLL), 276–296 (PFFL…AALA), 337–357 (IYIP…IVSF), 363–383 (LAAA…ILST), 396–416 (LVAL…SANL), and 419–439 (LLSG…IMTT).

Belongs to the HAK/KUP transporter (TC 2.A.72) family.

The protein localises to the cell inner membrane. It carries out the reaction K(+)(in) + H(+)(in) = K(+)(out) + H(+)(out). Functionally, responsible for the low-affinity transport of potassium into the cell. Likely operates as a K(+):H(+) symporter. The protein is Low affinity potassium transport system protein Kup of Salmonella arizonae (strain ATCC BAA-731 / CDC346-86 / RSK2980).